The following is a 469-amino-acid chain: A-type ATP synthase subunit B (469 aa).

The protein belongs to the ATPase alpha/beta chains family. Has multiple subunits with at least A(3), B(3), C, D, E, F, H, I and proteolipid K(x).

It localises to the cell membrane. Component of the A-type ATP synthase that produces ATP from ADP in the presence of a proton gradient across the membrane. The B chain is a regulatory subunit. This Staphylothermus marinus (strain ATCC 43588 / DSM 3639 / JCM 9404 / F1) protein is A-type ATP synthase subunit B.